Consider the following 215-residue polypeptide: MKIVLLGPPGAGKGTQAKSISNRYSIPHISTGDIFRKNISENTPLGMEARSYMDKGLLVPDEVTINMVKDRLQEDDCLSGYLLDGFPRTVAQAEALNEFLENRNEQLDTALLIDVPSEFILDRMTGRRVCTSCGGSFHIKFNPPTIDGKCNLCGSDIVQRKDDTVETVKERIDVYDKQTQPLIEFYKSKNLLSMVDGTKAIDQVFEDICKLLGEQ.

ATP is bound at residue 10 to 15 (GAGKGT). Positions 30-59 (STGDIFRKNISENTPLGMEARSYMDKGLLV) are NMP. Residues Thr-31, Arg-36, 57–59 (LLV), 85–88 (GFPR), and Gln-92 contribute to the AMP site. Residues 126 to 163 (GRRVCTSCGGSFHIKFNPPTIDGKCNLCGSDIVQRKDD) form an LID region. Arg-127 is an ATP binding site. Residues Cys-130 and Cys-133 each coordinate Zn(2+). ATP is bound at residue 136-137 (SF). Residues Cys-150 and Cys-153 each coordinate Zn(2+). AMP contacts are provided by Arg-160 and Arg-171. ATP is bound at residue Lys-199.

This sequence belongs to the adenylate kinase family. In terms of assembly, monomer.

The protein resides in the cytoplasm. The catalysed reaction is AMP + ATP = 2 ADP. Its pathway is purine metabolism; AMP biosynthesis via salvage pathway; AMP from ADP: step 1/1. In terms of biological role, catalyzes the reversible transfer of the terminal phosphate group between ATP and AMP. Plays an important role in cellular energy homeostasis and in adenine nucleotide metabolism. This chain is Adenylate kinase, found in Clostridium botulinum (strain Alaska E43 / Type E3).